Reading from the N-terminus, the 436-residue chain is UPF0597 protein DP0591 (436 aa).

It belongs to the UPF0597 family.

The chain is UPF0597 protein DP0591 from Desulfotalea psychrophila (strain LSv54 / DSM 12343).